The sequence spans 383 residues: Deoxyguanosinetriphosphate triphosphohydrolase-like protein (383 aa).

Residues 62-198 enclose the HD domain; the sequence is RLTHSLEVST…AALADDISYI (137 aa).

Belongs to the dGTPase family. Type 2 subfamily.

In Rickettsia felis (strain ATCC VR-1525 / URRWXCal2) (Rickettsia azadi), this protein is Deoxyguanosinetriphosphate triphosphohydrolase-like protein.